Consider the following 255-residue polypeptide: Taurine import ATP-binding protein TauB (255 aa).

One can recognise an ABC transporter domain in the interval 2 to 229 (LQISHLYADY…RFVAGESSRS (228 aa)). Residue 34–41 (GPSGCGKT) coordinates ATP.

Belongs to the ABC transporter superfamily. Taurine importer (TC 3.A.1.17.1) family. The complex is composed of two ATP-binding proteins (TauB), two transmembrane proteins (TauC) and a solute-binding protein (TauA).

It is found in the cell inner membrane. It carries out the reaction taurine(out) + ATP + H2O = taurine(in) + ADP + phosphate + H(+). Part of the ABC transporter complex TauABC involved in taurine import. Responsible for energy coupling to the transport system. In Escherichia coli O6:H1 (strain CFT073 / ATCC 700928 / UPEC), this protein is Taurine import ATP-binding protein TauB.